The following is a 439-amino-acid chain: MTSYFDKIEKISFEGEKSTNPFAFKHYDANQVILGKTMAEHLRLAVCYWHTFCWNGNDMFGLGSLERSWQKNPNLLAGAEQKADIAFEFLNKLGVPYYCFHDVDIAPEGNSVREYVQNFHHIVDILERKQVETGIQLLWGTANCFTNPRYMSGAATNPNPEVFAWAATQVFNAMNATQRLGGENYVLWGGREGYETLLNTDLKREREQIGRFMQMVVEHKHKIGFKGTLLIEPKPQEPTKHQYDYDVATVYGFLKQFGLEKEIKVNIEANHATLAGHTFQHEIATACALDIFGSIDANRGDPQLGWDTDQFPNSVEENTLVMYEILKHGGFTTGGFNFDAKIRRQSIDPYDLFYAHIGAIDVLALSLKRAAKMLQEETLQKIVNERYAGWNSELGQHILQGKTSLETLAQLVQQKDLAPKPVSGQQEYLENLVNQVIYS.

Active-site residues include histidine 101 and aspartate 104. Residues glutamate 232, glutamate 268, histidine 271, aspartate 296, aspartate 307, aspartate 309, and aspartate 339 each coordinate Mg(2+).

Belongs to the xylose isomerase family. In terms of assembly, homotetramer. Requires Mg(2+) as cofactor.

It is found in the cytoplasm. The catalysed reaction is alpha-D-xylose = alpha-D-xylulofuranose. This Haemophilus influenzae (strain PittGG) protein is Xylose isomerase.